Consider the following 105-residue polypeptide: Urease subunit beta (105 aa).

Belongs to the urease beta subunit family. As to quaternary structure, heterotrimer of UreA (gamma), UreB (beta) and UreC (alpha) subunits. Three heterotrimers associate to form the active enzyme.

It localises to the cytoplasm. The enzyme catalyses urea + 2 H2O + H(+) = hydrogencarbonate + 2 NH4(+). Its pathway is nitrogen metabolism; urea degradation; CO(2) and NH(3) from urea (urease route): step 1/1. This chain is Urease subunit beta, found in Pseudomonas entomophila (strain L48).